Here is a 390-residue protein sequence, read N- to C-terminus: ASAGGGCRRGPSFSPGSIPSLAAERAPDPPLAMAGNVKKSSGAGGGGSGGSGAGGLIGLMKDAFQPHHHHHHLSPHPPCTVDKKMVEKCWKLMDKVVRLCQNPNVALKNSPPYILDLLPDTYQHLRTVLSRYEGKMETLGENEYFRVFMENLMKKTKQTISLFKEGKERMYEENSQPRRNLTKLSLIFSHMLAELKGIFPSGLFQGDTFRITKADAAEFWRKAFGEKTIVPWKSFRQALHEVHPISSGLEAMALKSTIDLTCNDYISVFEFDIFTRLFQPWSSLLRNWNSLAVTHPGYMAFLTYDEVKARLQKFIHKPGSYIFRLSCTRLGQWAIGYVTADGNILQTIPHNKPLFQALIDGFREGFYLFPDGRNQNPDLTGLCEPTPHFS.

The interval 1–52 (ASAGGGCRRGPSFSPGSIPSLAAERAPDPPLAMAGNVKKSSGAGGGGSGGSG) is disordered. The span at 42–52 (GAGGGGSGGSG) shows a compositional bias: gly residues. The tract at residues 77 to 205 (PPCTVDKKMV…KGIFPSGLFQ (129 aa)) is 4H. The Cbl-PTB domain maps to 77-381 (PPCTVDKKMV…GRNQNPDLTG (305 aa)). Positions 206–278 (GDTFRITKAD…FEFDIFTRLF (73 aa)) are EF-hand-like. Ca(2+) is bound by residues Asp259, Thr261, Asn263, Tyr265, and Glu270. An SH2-like region spans residues 279–381 (QPWSSLLRNW…GRNQNPDLTG (103 aa)). Position 324 (Arg324) interacts with 4-O-phospho-L-tyrosine.

In terms of biological role, induces early B-lineage lymphomas. This chain is Transforming protein cbl (V-CBL), found in Mus musculus (Mouse).